We begin with the raw amino-acid sequence, 201 residues long: Molybdenum cofactor guanylyltransferase (201 aa).

Residues 15–17 (LAG), Lys-28, Asp-74, and Asp-104 each bind GTP. Asp-104 contacts Mg(2+).

It belongs to the MobA family. As to quaternary structure, monomer. Requires Mg(2+) as cofactor.

The protein resides in the cytoplasm. It carries out the reaction Mo-molybdopterin + GTP + H(+) = Mo-molybdopterin guanine dinucleotide + diphosphate. Its function is as follows. Transfers a GMP moiety from GTP to Mo-molybdopterin (Mo-MPT) cofactor (Moco or molybdenum cofactor) to form Mo-molybdopterin guanine dinucleotide (Mo-MGD) cofactor. This is Molybdenum cofactor guanylyltransferase from Pseudomonas syringae pv. syringae (strain B728a).